The sequence spans 872 residues: Alanine--tRNA ligase (872 aa).

Zn(2+) contacts are provided by His567, His571, Cys669, and His673.

The protein belongs to the class-II aminoacyl-tRNA synthetase family. It depends on Zn(2+) as a cofactor.

Its subcellular location is the cytoplasm. It carries out the reaction tRNA(Ala) + L-alanine + ATP = L-alanyl-tRNA(Ala) + AMP + diphosphate. Catalyzes the attachment of alanine to tRNA(Ala) in a two-step reaction: alanine is first activated by ATP to form Ala-AMP and then transferred to the acceptor end of tRNA(Ala). Also edits incorrectly charged Ser-tRNA(Ala) and Gly-tRNA(Ala) via its editing domain. This chain is Alanine--tRNA ligase, found in Streptococcus pneumoniae serotype 2 (strain D39 / NCTC 7466).